The following is a 487-amino-acid chain: MPN domain-containing protein (487 aa).

Positions methionine 1 to alanine 55 are disordered. Alanine 2 is modified (N-acetylalanine). Residue serine 8 is modified to Phosphoserine. Residues glutamate 15 to aspartate 28 show a composition bias toward acidic residues. The span at threonine 33 to alanine 55 shows a compositional bias: gly residues. The region spanning threonine 61 to histidine 156 is the RAMA domain. Residues serine 113, serine 115, and tryptophan 135 each coordinate DNA. The tract at residues alanine 163–methionine 217 is disordered. 2 positions are modified to phosphoserine: serine 168 and serine 171. Residues glutamate 172 to valine 187 show a composition bias toward acidic residues. The MPN domain maps to valine 258–valine 393. Zn(2+) is bound by residues histidine 335, histidine 337, and aspartate 348. Residues histidine 335–aspartate 348 carry the JAMM motif motif.

The protein belongs to the peptidase M67 family. In terms of assembly, monomer. Mainly monomoric, but when binds to dsDNA, forms homotetramer assembled into two homodimers. May interact with histones; this interaction is facilitated by. In terms of processing, degraded following binding to N(6)-methyladenosine methylated DNA (m6A).

Its function is as follows. Probable protease. Acts as a sensor of N(6)-methyladenosine methylation on DNA (m6A): recognizes and binds m6A DNA, leading to its degradation. Binds only double strand DNA (dsDNA) in a sequence-independent manner. This is MPN domain-containing protein from Mus musculus (Mouse).